Consider the following 698-residue polypeptide: Elongation factor G 1 (698 aa).

In terms of domain architecture, tr-type G spans 8–290; the sequence is ERYRNIGIVA…AVVDFLPAPI (283 aa). GTP contacts are provided by residues 17–24, 88–92, and 142–145; these read AHVDAGKT, DTPGH, and NKMD.

Belongs to the TRAFAC class translation factor GTPase superfamily. Classic translation factor GTPase family. EF-G/EF-2 subfamily.

It localises to the cytoplasm. In terms of biological role, catalyzes the GTP-dependent ribosomal translocation step during translation elongation. During this step, the ribosome changes from the pre-translocational (PRE) to the post-translocational (POST) state as the newly formed A-site-bound peptidyl-tRNA and P-site-bound deacylated tRNA move to the P and E sites, respectively. Catalyzes the coordinated movement of the two tRNA molecules, the mRNA and conformational changes in the ribosome. The sequence is that of Elongation factor G 1 from Shewanella frigidimarina (strain NCIMB 400).